The sequence spans 453 residues: MGSVLGLCSMASWIPCLCGSAPCLLCRCCPSGNNSTVTRLIYALFLLVGVCVACVMLIPGMEEQLNKIPGFCENEKGVVPCNILVGYKAVYRLCFGLAMFYLLLSLLMIKVKSSSDPRAAVHNGFWFFKFAAAIAIIIGAFFIPEGTFTTVWFYVGMAGAFCFILIQLVLLIDFAHSWNESWVEKMEEGNSRCWYAALLSATALNYLLSLVAIVLFFVYYTHPASCSENKAFISVNMLLCIGASVMSILPKIQESQPRSGLLQSSVITVYTMYLTWSAMTNEPETNCNPSLLSIIGYNTTSTVPKEGQSVQWWHAQGIIGLILFLLCVFYSSIRTSNNSQVNKLTLTSDESTLIEDGGARSDGSLEDGDDVHRAVDNERDGVTYSYSFFHFMLFLASLYIMMTLTNWYRYEPSREMKSQWTAVWVKISSSWIGIVLYVWTLVAPLVLTNRDFD.

Glycine 2 is lipidated: N-myristoyl glycine. The Cytoplasmic portion of the chain corresponds to glycine 2–arginine 39. Residues leucine 40 to glycine 60 traverse the membrane as a helical segment. The Lumenal segment spans residues methionine 61 to lysine 88. A helical transmembrane segment spans residues alanine 89–isoleucine 109. Topologically, residues lysine 110–asparagine 123 are cytoplasmic. The chain crosses the membrane as a helical span at residues glycine 124–proline 144. Residues glutamate 145 to valine 151 lie on the Lumenal side of the membrane. The chain crosses the membrane as a helical span at residues tryptophan 152 to isoleucine 172. Residues aspartate 173–alanine 197 are Cytoplasmic-facing. Residues leucine 198–valine 218 form a helical membrane-spanning segment. The Lumenal portion of the chain corresponds to tyrosine 219–alanine 231. Residues phenylalanine 232–isoleucine 252 form a helical membrane-spanning segment. At glutamine 253–serine 259 the chain is on the cytoplasmic side. A helical membrane pass occupies residues glycine 260 to threonine 280. Residues asparagine 281 to serine 309 are Lumenal-facing. The helical transmembrane segment at valine 310–tyrosine 330 threads the bilayer. Over serine 331 to serine 387 the chain is Cytoplasmic. Serine 351 is subject to Phosphoserine. A Phosphothreonine modification is found at threonine 352. Phosphoserine is present on residues serine 361 and serine 364. A helical transmembrane segment spans residues phenylalanine 388–tyrosine 408. At arginine 409–lysine 426 the chain is on the lumenal side. The chain crosses the membrane as a helical span at residues isoleucine 427–leucine 447. Topologically, residues threonine 448–aspartate 453 are cytoplasmic.

It belongs to the TDE1 family. As to quaternary structure, interacts with SPTLC1.

The protein localises to the endoplasmic reticulum membrane. Functionally, enhances the incorporation of serine into phosphatidylserine and sphingolipids. The chain is Serine incorporator 1 (SERINC1) from Pongo abelii (Sumatran orangutan).